The following is a 105-amino-acid chain: uncharacterized protein (105 aa).

Residues Met1–Gly27 are disordered.

This is an uncharacterized protein from Homo sapiens (Human).